We begin with the raw amino-acid sequence, 336 residues long: IgLON family member 5 (336 aa).

The first 30 residues, 1-30 (MPPPAPGARLRLLAAAALAGLAVISRGLLS), serve as a signal peptide directing secretion. Ig-like C2-type domains lie at 33–122 (LEFS…QPYT), 132–213 (PARI…VLVT), and 218–307 (PTIT…MRLL). Residues N41, N49, N67, and N137 are each glycosylated (N-linked (GlcNAc...) asparagine). Cysteines 54 and 112 form a disulfide. Cystine bridges form between C154-C195 and C238-C291. N-linked (GlcNAc...) asparagine glycosylation occurs at N288.

It belongs to the immunoglobulin superfamily. IgLON family.

The protein resides in the secreted. The polypeptide is IgLON family member 5 (Iglon5) (Mus musculus (Mouse)).